Reading from the N-terminus, the 638-residue chain is Intron-encoded RNA maturase bI4 (638 aa).

The tract at residues Met-1–Gln-253 is COB exons 1 to 4 encoded. A COB intron 4 encoded region spans residues Gln-253–Asn-638.

The protein in the C-terminal section; belongs to the LAGLIDADG endonuclease family. As to quaternary structure, forms a ternary complex with intron derived RNA and the imported mitochondrial leucyl-tRNA synthetase NAM2. The proteins do not interact directly with each other. The mature protein may arise from proteolytic cleavage of an in-frame translation of COB exons 1 to 4 plus intron 4, containing the bI4 open reading frame. Cleavage would take place close to the Met-385 resulting in an active maturase of about 30 kDa.

The protein localises to the mitochondrion. Mitochondrial mRNA maturase required for splicing of intron 4 of the cytochrome b (COB) gene, containing its own coding sequence, and intron 4 in COX1, coding for the related homing endonuclease aI4. In vivo splicing requires in addition the imported mitochondrial leucyl-tRNA synthetase NAM2. Both proteins seem to stimulate the intrinsic ribozyme activity of intron bI4 through binding to and stabilizing specific secondary and tertiary structure elements in the RNA. This Saccharomyces cerevisiae (strain ATCC 204508 / S288c) (Baker's yeast) protein is Intron-encoded RNA maturase bI4 (BI4).